Here is a 39-residue protein sequence, read N- to C-terminus: Anthranilate phosphoribosyltransferase (39 aa).

It belongs to the anthranilate phosphoribosyltransferase family. As to quaternary structure, homodimer.

It carries out the reaction N-(5-phospho-beta-D-ribosyl)anthranilate + diphosphate = 5-phospho-alpha-D-ribose 1-diphosphate + anthranilate. It functions in the pathway amino-acid biosynthesis; L-tryptophan biosynthesis; L-tryptophan from chorismate: step 2/5. Functionally, catalyzes the transfer of the phosphoribosyl group of 5-phosphorylribose-1-pyrophosphate (PRPP) to anthranilate to yield N-(5'-phosphoribosyl)-anthranilate (PRA). The chain is Anthranilate phosphoribosyltransferase (trpD) from Pectobacterium carotovorum (Erwinia carotovora).